The primary structure comprises 306 residues: MELTFLGTSAGVPTRTRNMTSIILNLQQPTRAEMWLFDCGEGTQHQFLHTPYHPGKLNKIFITHLHGDHLFGLPGLLCSRSMQGNSLPLTLYGPKGLKEFVETALRLSGSWTDYPLTIIEVGPGLVFDEEGYRVTAYPLSHPVECYGYRIEQHDKPGTLDAAQLIADGVPPGPLFHQLKRGQRVTLEDGRVIDGSRYLGPATPGKTLAIFGDTAPCPQALEMARGADVMVHETTLEQAMAEKANSRGHSSSQQTAALAKEAGVGTLIATHFSSRYDAEGCLKMLAECREIFANTLLAEDFMVYKMA.

Residues His-64, His-66, Asp-68, His-69, His-141, Asp-212, and His-270 each coordinate Zn(2+). The Proton acceptor role is filled by Asp-68.

Belongs to the RNase Z family. RNase BN subfamily. Homodimer. The cofactor is Zn(2+).

Functionally, zinc phosphodiesterase, which has both exoribonuclease and endoribonuclease activities. The chain is Ribonuclease BN from Klebsiella pneumoniae (strain 342).